The chain runs to 119 residues: Beta-2-microglobulin (119 aa).

The first 20 residues, 1–20 (MVCSVVVALLALLSLSGLEA), serve as a signal peptide directing secretion. In terms of domain architecture, Ig-like C1-type spans 25–114 (PKIQVYSRHP…VTFSTPKTVK (90 aa)). The cysteines at positions 45 and 100 are disulfide-linked.

This sequence belongs to the beta-2-microglobulin family. As to quaternary structure, heterodimer of an alpha chain and a beta chain. Beta-2-microglobulin is the beta-chain of major histocompatibility complex class I molecules.

It localises to the secreted. Functionally, component of the class I major histocompatibility complex (MHC). Involved in the presentation of peptide antigens to the immune system. The protein is Beta-2-microglobulin (B2M) of Cebuella pygmaea (Pygmy marmoset).